The sequence spans 244 residues: Ribonuclease HII (244 aa).

In terms of domain architecture, RNase H type-2 spans 23–236 (KIILGLDEAG…SKKLLKEFEE (214 aa)). A divalent metal cation is bound by residues Asp-29, Glu-30, and Asp-130.

It belongs to the RNase HII family. Mn(2+) serves as cofactor. It depends on Mg(2+) as a cofactor.

Its subcellular location is the cytoplasm. The enzyme catalyses Endonucleolytic cleavage to 5'-phosphomonoester.. In terms of biological role, endonuclease that specifically degrades the RNA of RNA-DNA hybrids. This Methanococcus vannielii (strain ATCC 35089 / DSM 1224 / JCM 13029 / OCM 148 / SB) protein is Ribonuclease HII.